A 337-amino-acid polypeptide reads, in one-letter code: Angiopoietin-related protein 7 (337 aa).

Residues Met1–Leu21 form the signal peptide. Residues Gln30–Thr110 are a coiled coil. Asn49 carries an N-linked (GlcNAc...) asparagine glycan. One can recognise a Fibrinogen C-terminal domain in the interval Gln113–Ala334. Cysteines 122 and 153 form a disulfide. 2 N-linked (GlcNAc...) asparagine glycosylation sites follow: Asn244 and Asn258. A disulfide bridge links Cys276 with Cys289. A glycan (N-linked (GlcNAc...) asparagine) is linked at Asn320.

As to quaternary structure, homotetramer; disulfide-linked.

It localises to the secreted. Functionally, has a role in the formation and organization of the extracellular matrix. In the eye, it functions as a mediator of dexamethasone-induced matrix deposition in the trabecular meshwork, the tissue responsible for the outflow of the ocular aqueous humor and for the maintenance of intraocular pressure. Is a negative regulator of angiogenesis in the cornea, and plays a major role in maintaining corneal avascularity and transparency. This is Angiopoietin-related protein 7 (Angptl7) from Mus musculus (Mouse).